The sequence spans 204 residues: NAD(P)H-quinone oxidoreductase subunit M, chloroplastic (204 aa).

The transit peptide at 1 to 27 directs the protein to the chloroplast; the sequence is MASTSMSLTRACKVHAVLACSIPSVSS.

Belongs to the NDH complex subunit M family. In terms of assembly, part of the chloroplast NDH complex, composed of a mixture of chloroplast and nucleus encoded subunits. Component of the NDH subcomplex A, at least composed of ndhH, ndhI, ndhJ, ndhK, ndhL, ndhM, ndhN and ndhO.

The protein localises to the plastid. Its subcellular location is the chloroplast thylakoid membrane. It carries out the reaction a plastoquinone + NADH + (n+1) H(+)(in) = a plastoquinol + NAD(+) + n H(+)(out). It catalyses the reaction a plastoquinone + NADPH + (n+1) H(+)(in) = a plastoquinol + NADP(+) + n H(+)(out). Its function is as follows. NDH shuttles electrons from NAD(P)H:plastoquinone, via FMN and iron-sulfur (Fe-S) centers, to quinones in the photosynthetic chain and possibly in a chloroplast respiratory chain. The immediate electron acceptor for the enzyme in this species is believed to be plastoquinone. Couples the redox reaction to proton translocation, and thus conserves the redox energy in a proton gradient. In Physcomitrium patens (Spreading-leaved earth moss), this protein is NAD(P)H-quinone oxidoreductase subunit M, chloroplastic.